The primary structure comprises 374 residues: Pectate lyase 3 (374 aa).

An N-terminal signal peptide occupies residues 1–22 (MKYLLPSAAAGLLLLAAQPTMA). An intrachain disulfide couples Cys93 to Cys176. 4 residues coordinate Ca(2+): Asp150, Asp152, Glu187, and Asp191. The active site involves Arg239. An intrachain disulfide couples Cys350 to Cys373.

This sequence belongs to the polysaccharide lyase 1 family. PLADES subfamily. Ca(2+) serves as cofactor.

It is found in the secreted. The enzyme catalyses Eliminative cleavage of (1-&gt;4)-alpha-D-galacturonan to give oligosaccharides with 4-deoxy-alpha-D-galact-4-enuronosyl groups at their non-reducing ends.. Its pathway is glycan metabolism; pectin degradation; 2-dehydro-3-deoxy-D-gluconate from pectin: step 2/5. In terms of biological role, involved in maceration and soft-rotting of plant tissue. The sequence is that of Pectate lyase 3 (pel3) from Pectobacterium carotovorum (Erwinia carotovora).